Reading from the N-terminus, the 359-residue chain is GTP cyclohydrolase FolE2 (359 aa).

The protein belongs to the GTP cyclohydrolase IV family.

The enzyme catalyses GTP + H2O = 7,8-dihydroneopterin 3'-triphosphate + formate + H(+). It functions in the pathway cofactor biosynthesis; 7,8-dihydroneopterin triphosphate biosynthesis; 7,8-dihydroneopterin triphosphate from GTP: step 1/1. Its function is as follows. Converts GTP to 7,8-dihydroneopterin triphosphate. This is GTP cyclohydrolase FolE2 from Cereibacter sphaeroides (strain ATCC 17025 / ATH 2.4.3) (Rhodobacter sphaeroides).